The following is a 476-amino-acid chain: Cytoplasmic 60S subunit biogenesis factor ZNF622 (476 aa).

Residue Ala2 is modified to N-acetylalanine. 2 consecutive U1-type zinc fingers follow at residues 4–28 and 69–93; these read LTCI…TDWH and TYCT…SRRH. The interval 137–243 is disordered; the sequence is AIKAQPSTSP…AEDAAAEESP (107 aa). Residues 167-177 are compositionally biased toward basic and acidic residues; sequence VPERDPTEKPP. A compositionally biased stretch (acidic residues) spans 195–239; it reads EDGEEEGEEEEEDDEDEDWEDIDSDDGLECEDPGVEDQDAEDAAA. Residue Ser275 is modified to Phosphoserine.

Belongs to the REI1 family. As to quaternary structure, homo- and heterodimer. Associates with pre-60S ribosomal particles. Interacts with MELK and MYBL2. Interacts with DNAJC21. Post-translationally, phosphorylated by MELK. The phosphorylation may redirect the protein to the nucleus. Ubiquitinated by HECTD1, leading to its degradation.

Its subcellular location is the cytoplasm. The protein localises to the nucleus. Functionally, pre-60S-associated cytoplasmic factor involved in the cytoplasmic maturation of the 60S subunit. The sequence is that of Cytoplasmic 60S subunit biogenesis factor ZNF622 (Znf622) from Mus musculus (Mouse).